The primary structure comprises 579 residues: Mycobactin import ATP-binding/permease protein IrtB (579 aa).

Residues 1 to 25 (MIRTLLRLVPAEKRGAVAGYAVLTL) are Cytoplasmic-facing. In terms of domain architecture, ABC transmembrane type-1 spans 21 to 299 (AVLTLLSVLL…IADLAPALET (279 aa)). A helical transmembrane segment spans residues 26-46 (LSVLLRAVGAVLLIPLLAALF). Over 47–48 (SD) the chain is Periplasmic. Residues 49-69 (TPSDAWLWLGWLTAVTLAGWV) traverse the membrane as a helical segment. Residues 70–126 (TDTNTARLGFDLGFAVLSRTQHDMADRLPNVAMSWFTPDNTATARQAIAATGPELAG) lie on the Cytoplasmic side of the membrane. The next 2 helical transmembrane spans lie at 127–147 (LVVNLLTPLIGAALLPAAIGV) and 148–168 (ALLFVSVPLGLAALAGVAVLF). Over 169-241 (GALALSGRLS…RLLTMQIPGQ (73 aa)) the chain is Cytoplasmic. Residues 242-262 (VLFSLAGQVALIGFAGMAVWL) traverse the membrane as a helical segment. Topologically, residues 263–272 (TVRGQLGVPE) are periplasmic. A helical transmembrane segment spans residues 273 to 293 (AIALIVVLVRYLEPFAAIADL). Residues 294–579 (APALETTRAT…SEWAIGSTAR (286 aa)) are Cytoplasmic-facing. The 234-residue stretch at 332-565 (IEFDDVRFSY…GGRFAQFWAQ (234 aa)) folds into the ABC transporter domain. Residue 364 to 371 (GPSGSGKT) participates in ATP binding.

Belongs to the ABC transporter superfamily. Siderophore-Fe(3+) uptake transporter (SIUT) (TC 3.A.1.21) family. In terms of assembly, forms a heterodimer with IrtA.

Its subcellular location is the cell inner membrane. The ATPase activity of IrtAB is stimulated more than 38-fold in the presence of Fe-MBT, and more than 10-fold in the presence of Fe-cMBT. Part of the ABC transporter complex IrtAB involved in the import of iron-bound mycobactin (Fe-MBT) and carboxymycobactin (Fe-cMBT). Has a preference for Fe-MBT over Fe-cMBT. Transmembrane domains (TMD) form a pore in the membrane and the ATP-binding domain (NBD) is responsible for energy generation. This is Mycobactin import ATP-binding/permease protein IrtB from Mycolicibacterium thermoresistibile (strain ATCC 19527 / DSM 44167 / CIP 105390 / JCM 6362 / NCTC 10409 / 316) (Mycobacterium thermoresistibile).